Reading from the N-terminus, the 136-residue chain is Small ribosomal subunit protein uS9 (136 aa).

The tract at residues Ser-97 to Arg-136 is disordered. Residues Pro-98 to Ala-116 are compositionally biased toward basic and acidic residues. Positions Lys-117 to Arg-136 are enriched in basic residues.

This sequence belongs to the universal ribosomal protein uS9 family.

This is Small ribosomal subunit protein uS9 from Prochlorococcus marinus (strain MIT 9312).